The following is a 370-amino-acid chain: 3 beta-hydroxysteroid dehydrogenase/Delta 5--&gt;4-isomerase (370 aa).

Residue Y158 is the Proton acceptor of the active site. K162 lines the NAD(+) pocket.

Belongs to the 3-beta-HSD family. In terms of assembly, monomer.

It is found in the cytoplasm. The catalysed reaction is a 3beta-hydroxy-Delta(5)-steroid + NAD(+) = a 3-oxo-Delta(5)-steroid + NADH + H(+). It carries out the reaction cholesterol + NAD(+) = cholest-5-en-3-one + NADH + H(+). It catalyses the reaction pregnenolone + NAD(+) = pregn-5-ene-3,20-dione + NADH + H(+). The enzyme catalyses 3beta-hydroxyandrost-5-en-17-one + NAD(+) = androst-5-ene-3,17-dione + NADH + H(+). The catalysed reaction is a 3-oxo-Delta(5)-steroid = a 3-oxo-Delta(4)-steroid. It carries out the reaction cholest-5-en-3-one = cholest-4-en-3-one. It catalyses the reaction pregn-5-ene-3,20-dione = progesterone. The enzyme catalyses androst-5-ene-3,17-dione = androst-4-ene-3,17-dione. The protein operates within lipid metabolism; steroid biosynthesis. 3-beta-HSD is a bifunctional enzyme, that catalyzes the oxidation and isomerization of cholesterol, pregnenolone, and dehydroepiandrosterone (DHEA) into cholest-4-en-3-one, progesterone, and androsterone, respectively. The protein is 3 beta-hydroxysteroid dehydrogenase/Delta 5--&gt;4-isomerase of Mycobacterium tuberculosis (strain CDC 1551 / Oshkosh).